The primary structure comprises 359 residues: Guanine nucleotide-binding protein-like alpha-11 subunit (359 aa).

A lipid anchor (N-myristoyl glycine) is attached at Gly2. Residues 29-359 (KLIKILMMGN…YVKKILEDTI (331 aa)) form the G-alpha domain. The G1 motif stretch occupies residues 32–45 (KILMMGNENSAKST). Residue Ser44 coordinates Mg(2+). A G2 motif region spans residues 176 to 185 (DIIRCSKNNQ). GTP is bound by residues 178–185 (IRCSKNNQ), 204–208 (DTGNQ), and 281–284 (NKKE). The segment at 200 to 209 (FVFVDTGNQK) is G3 motif. Positions 277–284 (IVLFNKKE) are G4 motif. The G5 motif stretch occupies residues 337 to 342 (FNSSDT).

The protein belongs to the G-alpha family.

This is Guanine nucleotide-binding protein-like alpha-11 subunit (gpaK) from Dictyostelium discoideum (Social amoeba).